A 73-amino-acid polypeptide reads, in one-letter code: Acyl carrier protein (73 aa).

A Carrier domain is found at 1-73 (MAVFEKVQDI…DLVKYVENNK (73 aa)). O-(pantetheine 4'-phosphoryl)serine is present on Ser35.

Belongs to the acyl carrier protein (ACP) family. In terms of processing, 4'-phosphopantetheine is transferred from CoA to a specific serine of apo-ACP by AcpS. This modification is essential for activity because fatty acids are bound in thioester linkage to the sulfhydryl of the prosthetic group.

The protein resides in the cytoplasm. Its pathway is lipid metabolism; fatty acid biosynthesis. Its function is as follows. Carrier of the growing fatty acid chain in fatty acid biosynthesis. The polypeptide is Acyl carrier protein (Lactococcus lactis subsp. lactis (strain IL1403) (Streptococcus lactis)).